The chain runs to 449 residues: tRNA-2-methylthio-N(6)-dimethylallyladenosine synthase (449 aa).

The region spanning 3-124 (KMLYIKTYGC…LPTMLEKLDS (122 aa)) is the MTTase N-terminal domain. Residues cysteine 12, cysteine 48, cysteine 87, cysteine 163, cysteine 167, and cysteine 170 each contribute to the [4Fe-4S] cluster site. The region spanning 149-380 (KSPTVSGLVS…QAQLMLQQLE (232 aa)) is the Radical SAM core domain. The TRAM domain occupies 383–447 (QKLIGKVVPV…ASSLFGEVCP (65 aa)).

Belongs to the methylthiotransferase family. MiaB subfamily. Monomer. [4Fe-4S] cluster serves as cofactor.

The protein localises to the cytoplasm. It carries out the reaction N(6)-dimethylallyladenosine(37) in tRNA + (sulfur carrier)-SH + AH2 + 2 S-adenosyl-L-methionine = 2-methylsulfanyl-N(6)-dimethylallyladenosine(37) in tRNA + (sulfur carrier)-H + 5'-deoxyadenosine + L-methionine + A + S-adenosyl-L-homocysteine + 2 H(+). In terms of biological role, catalyzes the methylthiolation of N6-(dimethylallyl)adenosine (i(6)A), leading to the formation of 2-methylthio-N6-(dimethylallyl)adenosine (ms(2)i(6)A) at position 37 in tRNAs that read codons beginning with uridine. The sequence is that of tRNA-2-methylthio-N(6)-dimethylallyladenosine synthase from Orientia tsutsugamushi (strain Boryong) (Rickettsia tsutsugamushi).